Reading from the N-terminus, the 657-residue chain is MRDTTGGPAGAEVWTVPGLLGARKLDLLALIPLVAIVALMTLVGALLFAVAQSDANRARAKLATDALWVEQTLRFQMAVDEDVLVRLALDASAGASQQALSARARLHLAANPETLGLRWYDATGRLIAAVPEGPGPAEAALVRQLLASGALPPRPVYGPVRDGRVVLAERVSASGGVVVATVSLPMMLERHLPWWIAEQYGVRISDTSGVLAERARRPIAAAAPRHGISFDPPLAGTTLEIMAYDAPDAFGNAALLAAIGALSVFAVLAMVVLHRNALRRRMAEDRLRAEMAFRRAMEESLTVGMRAKDLSGRILYVNGAFCKLVGLAAEDLVGRAQPMPYWAPDFLEETLARQRQLIEGQPVPQAFETRFRRSDGSEIEVQVFEAPLIDAGGRHRGWMGSVIDITQAKQAARLARAQDESLARTGRLVTLGEMASTLAHELNQPLAAIASYAAGGLNLFDQPEPNLTMLRQAFEKMGAQARRAGLVIRRVQDFVKKRTPQLAALDLSEVLAEALSITAPVAREHRVKLASLIEGRIPGVQADRILIEQVLVNLIRNGVEAMAEGPRTGDDLTVRLARAGAAVTIEVMDRGPGISDAVAASLFDPFTSTKSEGMGMGLNICRSIVEMHHGSLSHGPRAGGGTVFTVTLPVPQEGAPA.

Topologically, residues 1–26 (MRDTTGGPAGAEVWTVPGLLGARKLD) are cytoplasmic. The chain crosses the membrane as a helical span at residues 27–51 (LLALIPLVAIVALMTLVGALLFAVA). At 52–252 (QSDANRARAK…AYDAPDAFGN (201 aa)) the chain is on the periplasmic side. A helical membrane pass occupies residues 253 to 273 (AALLAAIGALSVFAVLAMVVL). Residues 274 to 657 (HRNALRRRMA…LPVPQEGAPA (384 aa)) lie on the Cytoplasmic side of the membrane. A PAS domain is found at 289–361 (AEMAFRRAME…ARQRQLIEGQ (73 aa)). The region spanning 365-417 (QAFETRFRRSDGSEIEVQVFEAPLIDAGGRHRGWMGSVIDITQAKQAARLARA) is the PAC domain. The interval 407 to 422 (QAKQAARLARAQDESL) is inter-domain linker. The 216-residue stretch at 437-652 (TLAHELNQPL…VFTVTLPVPQ (216 aa)) folds into the Histidine kinase domain. His-440 is subject to Phosphohistidine; by autocatalysis.

The protein resides in the cell inner membrane. The catalysed reaction is ATP + protein L-histidine = ADP + protein N-phospho-L-histidine.. Functionally, member of the two-component regulatory system DctS/DctR involved in the transport of C4-dicarboxylates. DctS functions as a membrane-associated protein kinase that phosphorylates DctR in response to environmental signals. This Rhodobacter capsulatus (Rhodopseudomonas capsulata) protein is C4-dicarboxylate transport sensor protein DctS (dctS).